Reading from the N-terminus, the 286-residue chain is Beta-lactamase SHV-29 (286 aa).

The first 21 residues, 1–21, serve as a signal peptide directing secretion; the sequence is MRYIRLCIISLLATLPLAVHA. The active-site Acyl-ester intermediate is the serine 66. A disulfide bond links cysteine 73 and cysteine 119. The active-site Proton acceptor is the glutamate 164. 230 to 232 contributes to the substrate binding site; sequence KTG.

This sequence belongs to the class-A beta-lactamase family.

The catalysed reaction is a beta-lactam + H2O = a substituted beta-amino acid. This is Beta-lactamase SHV-29 (bla) from Klebsiella pneumoniae.